A 333-amino-acid polypeptide reads, in one-letter code: Adenosine deaminase (333 aa).

Zn(2+) is bound by residues His12 and His14. His14, Asp16, and Gly170 together coordinate substrate. A Zn(2+)-binding site is contributed by His197. The Proton donor role is filled by Glu200. Residue Asp278 participates in Zn(2+) binding. Substrate is bound at residue Asp279.

The protein belongs to the metallo-dependent hydrolases superfamily. Adenosine and AMP deaminases family. Adenosine deaminase subfamily. Zn(2+) is required as a cofactor.

It catalyses the reaction adenosine + H2O + H(+) = inosine + NH4(+). It carries out the reaction 2'-deoxyadenosine + H2O + H(+) = 2'-deoxyinosine + NH4(+). In terms of biological role, catalyzes the hydrolytic deamination of adenosine and 2-deoxyadenosine. In Salmonella typhi, this protein is Adenosine deaminase.